Consider the following 553-residue polypeptide: Probable malate:quinone oxidoreductase (553 aa).

A compositionally biased stretch (low complexity) spans 534-543; that stretch reads QLKPQVQPQP. Residues 534 to 553 are disordered; it reads QLKPQVQPQPAHKAVADIAL.

The protein belongs to the MQO family. The cofactor is FAD.

It catalyses the reaction (S)-malate + a quinone = a quinol + oxaloacetate. Its pathway is carbohydrate metabolism; tricarboxylic acid cycle; oxaloacetate from (S)-malate (quinone route): step 1/1. The polypeptide is Probable malate:quinone oxidoreductase (Citrobacter koseri (strain ATCC BAA-895 / CDC 4225-83 / SGSC4696)).